Consider the following 120-residue polypeptide: Chaperonin GroEL (120 aa).

ATP is bound at residue 23-27 (DGTTT).

Belongs to the chaperonin (HSP60) family. As to quaternary structure, forms a cylinder of 14 subunits composed of two heptameric rings stacked back-to-back. Interacts with the co-chaperonin GroES.

It localises to the cytoplasm. It catalyses the reaction ATP + H2O + a folded polypeptide = ADP + phosphate + an unfolded polypeptide.. In terms of biological role, together with its co-chaperonin GroES, plays an essential role in assisting protein folding. The GroEL-GroES system forms a nano-cage that allows encapsulation of the non-native substrate proteins and provides a physical environment optimized to promote and accelerate protein folding. This is Chaperonin GroEL from Mycobacterium intracellulare.